Reading from the N-terminus, the 360-residue chain is F-box protein SKP2A (360 aa).

An F-box domain is found at 25-71 (IKEWKDIPVELLMRILSLVDDRNVIVASGVCTGWRDAISFGLTRLRL). (indol-3-yl)acetate is bound by residues 127–128 (SL), 149–152 (NLSG), 175–178 (NLCG), and N202.

Part of a SCF (ASK-cullin-F-box) protein ligase complex. Interacts with CUL1 (RUB1-modified and non-modified isoforms), SKP1A, SKP1B and ASK18. Recruit DPB and phosphorylated E2FC. Interacts with auxin. Auxin controls the interaction with DPB. In terms of processing, polyubiquitinated and subsequently targeted to proteasome. Auxin promotes this ubiquitination-mediated degradation. Expressed in embryo, seedlings, hypocotyl, roots, leaves and flowers.

It is found in the nucleus. Its pathway is protein modification; protein ubiquitination. Component of SCF(SKP2A) E3 ubiquitin ligase complexes, which mediate the ubiquitination and subsequent proteasomal degradation of target proteins (including cell cycle repressors). Acts as an auxin receptor; one active auxin is indole-3-acetate. Regulates the stability of the transcription factors E2FC and DPB, repressors of cell proliferation. Confers increase tolerance to osmotic stress by promoting cell division, especially in meristems. Promotes the formation of lateral root primordia. This chain is F-box protein SKP2A (SKP2A), found in Arabidopsis thaliana (Mouse-ear cress).